The following is a 216-amino-acid chain: GTP cyclohydrolase 1 (216 aa).

Zn(2+)-binding residues include C108, H111, and C179.

Belongs to the GTP cyclohydrolase I family. In terms of assembly, toroid-shaped homodecamer, composed of two pentamers of five dimers.

It carries out the reaction GTP + H2O = 7,8-dihydroneopterin 3'-triphosphate + formate + H(+). It participates in cofactor biosynthesis; 7,8-dihydroneopterin triphosphate biosynthesis; 7,8-dihydroneopterin triphosphate from GTP: step 1/1. This Shewanella sp. (strain ANA-3) protein is GTP cyclohydrolase 1.